The chain runs to 218 residues: Antifreeze protein Maxi (218 aa).

The N-terminal stretch at 1-23 (MALSLFTVGQFIFLFWTISITEA) is a signal peptide.

The protein belongs to the type-I AFP family. Homodimer. As to expression, detected in blood serum (at protein level). Detected in liver.

The protein localises to the secreted. Functionally, contributes to protect fish blood from freezing at subzero sea water temperatures. Lowers the blood freezing point by about 1.1 degrees at a concentration of 0.1 mg/ml, and by about 1.5 degrees at a concentration of 0.2 mg/ml. Binds to nascent ice crystals and prevents further growth. The protein is Antifreeze protein Maxi of Pseudopleuronectes americanus (Winter flounder).